The primary structure comprises 187 residues: Ion-translocating oxidoreductase complex subunit B (187 aa).

A hydrophobic region spans residues 1–23 (MIAAAASMSALGLGLGYLLGAAA). A 4Fe-4S domain is found at 29 to 88 (ETPPIVEEIAKILPGTNCGACGFPGCNGLAEAMAEGNAPVTACTPGGRDVALALAEIVTV). Cysteine 46, cysteine 49, cysteine 54, cysteine 71, cysteine 112, cysteine 115, cysteine 118, cysteine 122, cysteine 142, cysteine 145, cysteine 148, and cysteine 152 together coordinate [4Fe-4S] cluster. 4Fe-4S ferredoxin-type domains follow at residues 103 to 132 (MVAF…GGAK) and 133 to 162 (QIHT…SRVK).

Belongs to the 4Fe4S bacterial-type ferredoxin family. RnfB subfamily. The complex is composed of six subunits: RnfA, RnfB, RnfC, RnfD, RnfE and RnfG. Requires [4Fe-4S] cluster as cofactor.

It is found in the cellular chromatophore membrane. Part of a membrane-bound complex that couples electron transfer with translocation of ions across the membrane. Required for nitrogen fixation. Involved in electron transfer to nitrogenase. This is Ion-translocating oxidoreductase complex subunit B from Rhodobacter capsulatus (Rhodopseudomonas capsulata).